Consider the following 80-residue polypeptide: Exodeoxyribonuclease 7 small subunit (80 aa).

The protein belongs to the XseB family. In terms of assembly, heterooligomer composed of large and small subunits.

The protein resides in the cytoplasm. It catalyses the reaction Exonucleolytic cleavage in either 5'- to 3'- or 3'- to 5'-direction to yield nucleoside 5'-phosphates.. Bidirectionally degrades single-stranded DNA into large acid-insoluble oligonucleotides, which are then degraded further into small acid-soluble oligonucleotides. This chain is Exodeoxyribonuclease 7 small subunit, found in Vibrio parahaemolyticus serotype O3:K6 (strain RIMD 2210633).